We begin with the raw amino-acid sequence, 369 residues long: Cytokine receptor common subunit gamma (369 aa).

Positions 1–22 (MLKLLLSPRSFLVLQLLLLRAG) are cleaved as a signal peptide. At 23-263 (WSSKVLMSSA…ENPSLFALEA (241 aa)) the chain is on the extracellular side. Residues Cys62 and Cys72 are joined by a disulfide bond. 4 N-linked (GlcNAc...) asparagine glycosylation sites follow: Asn71, Asn75, Asn84, and Asn96. Cysteines 102 and 115 form a disulfide. The 99-residue stretch at 156–254 (APENLTLSNL…VHWGSHTVEE (99 aa)) folds into the Fibronectin type-III domain. N-linked (GlcNAc...) asparagine glycosylation is found at Asn159 and Asn164. The WSXWS motif signature appears at 238–242 (WSKWS). A helical transmembrane segment spans residues 264–284 (VLIPVGTMGLIITLIFVYCWL). Residues 285 to 369 (ERMPPIPPIK…PPCYSLKPEA (85 aa)) lie on the Cytoplasmic side of the membrane. Positions 286 to 294 (RMPPIPPIK) match the Box 1 motif motif.

It belongs to the type I cytokine receptor family. Type 5 subfamily. In terms of assembly, the gamma subunit is common to the IL2, IL4, IL7, IL15, IL21 and probably also the IL13 receptors. Interacts with SHB upon interleukin stimulation. Interacts with IL9.

It is found in the cell membrane. Its subcellular location is the cell surface. Common subunit for the receptors for a variety of interleukins. Probably in association with IL15RA, involved in the stimulation of neutrophil phagocytosis by IL15. The chain is Cytokine receptor common subunit gamma (Il2rg) from Mus musculus (Mouse).